We begin with the raw amino-acid sequence, 208 residues long: Protein GrpE (208 aa).

Residues 1 to 25 (MVDNKDFNEELKENIQEELDNETKA) are compositionally biased toward basic and acidic residues. A disordered region spans residues 1–38 (MVDNKDFNEELKENIQEELDNETKAENPNIDEEVEEVS). Residues 29 to 38 (NIDEEVEEVS) show a composition bias toward acidic residues.

Belongs to the GrpE family. Homodimer.

It is found in the cytoplasm. Its function is as follows. Participates actively in the response to hyperosmotic and heat shock by preventing the aggregation of stress-denatured proteins, in association with DnaK and GrpE. It is the nucleotide exchange factor for DnaK and may function as a thermosensor. Unfolded proteins bind initially to DnaJ; upon interaction with the DnaJ-bound protein, DnaK hydrolyzes its bound ATP, resulting in the formation of a stable complex. GrpE releases ADP from DnaK; ATP binding to DnaK triggers the release of the substrate protein, thus completing the reaction cycle. Several rounds of ATP-dependent interactions between DnaJ, DnaK and GrpE are required for fully efficient folding. In Clostridium perfringens (strain ATCC 13124 / DSM 756 / JCM 1290 / NCIMB 6125 / NCTC 8237 / Type A), this protein is Protein GrpE.